The following is a 92-amino-acid chain: C-C motif chemokine 3 (92 aa).

The N-terminal stretch at 1-23 (MKVSTAALAVLLCTMALWNEVFS) is a signal peptide. Intrachain disulfides connect Cys-34-Cys-57 and Cys-35-Cys-73.

It belongs to the intercrine beta (chemokine CC) family. As to quaternary structure, self-associates. Also heterodimer of MIP-1-alpha(4-69) and MIP-1-beta(3-69). Interacts with CCR1.

It localises to the secreted. In terms of biological role, monokine with inflammatory and chemokinetic properties. Binds to CCR1, CCR4 and CCR5. One of the major HIV-suppressive factors produced by CD8+ T-cells. Recombinant MIP-1-alpha induces a dose-dependent inhibition of different strains of HIV-1, HIV-2, and simian immunodeficiency virus (SIV). This is C-C motif chemokine 3 (Ccl3) from Rattus norvegicus (Rat).